Consider the following 310-residue polypeptide: 5-oxoprolinase subunit C (310 aa).

The protein belongs to the PxpC family. In terms of assembly, forms a complex composed of PxpA, PxpB and PxpC.

The catalysed reaction is 5-oxo-L-proline + ATP + 2 H2O = L-glutamate + ADP + phosphate + H(+). In terms of biological role, catalyzes the cleavage of 5-oxoproline to form L-glutamate coupled to the hydrolysis of ATP to ADP and inorganic phosphate. This is 5-oxoprolinase subunit C from Escherichia coli (strain K12).